The following is a 589-amino-acid chain: MMSYEGNGDGVAISTENHNENYISLESSPFHEDSKSRESHDLKKDSSKISEKDNENGRDKDGNKDRDREKDRDREKSRDRDREKSRDRDRDRERSKDRQRDRHHRDRHRDRSRERSEKRDDLDDDHHRRSRDRDRRRSRDRDREVRHRRRSRSRSRSRSERRSRSEHRHKSEHRSRSRSRSRSKSKRRSGFDMAPPDMLAATAVAAAGQVPSVPTTATIPGMFSNMFPMVPGQQLGALPVLPVQAMTQQATRHARRVYVGGLPPTANEQSVSTFFSQVMSAIGGNTAGPGDAVVNVYINHEKKFAFVEMRSVEEASNAMALDGIILEGVPVKVRRPTDYNPSLAATLGPSQPNPNLNLGAVGLSSGSTGGLEGPDRIFVGGLPYYFTEVQIRELLESFGPLRGFNLVKDRETGNSKGYAFCVYQDPSVTDIACAALNGIKMGDKTLTVRRAIQGAIQPKPEQEEVLLYAQQQIALQRLMFQPGGTPTKIVCLTQVVTADDLRDDEEYAEIMEDMRQEGGKFGNLVNVVIPRPNPDHDPTPGVGKVFLEYADVDGSSKARSGMNGRKFGGNQVVAVYYPEDKYAQGDYED.

The interval 1–195 (MMSYEGNGDG…KRRSGFDMAP (195 aa)) is disordered. Over residues 14 to 27 (STENHNENYISLES) the composition is skewed to polar residues. Basic and acidic residues-rich tracts occupy residues 29–100 (PFHE…DRQR) and 109–145 (RDRS…DREV). Basic residues-rich tracts occupy residues 146–156 (RHRRRSRSRSR) and 164–188 (RSEH…SKRR). RRM domains are found at residues 255-338 (RRVY…RPTD), 375-453 (DRIF…RAIQ), and 494-580 (QVVT…YPED).

Belongs to the splicing factor SR family. In terms of assembly, component of the spliceosome. Interacts with SF1 in the nucleus.

It is found in the nucleus. The protein resides in the nucleus speckle. Necessary for the splicing of pre-mRNA. The polypeptide is Splicing factor U2af large subunit B (Arabidopsis thaliana (Mouse-ear cress)).